A 157-amino-acid polypeptide reads, in one-letter code: Arginine repressor (157 aa).

Belongs to the ArgR family.

It is found in the cytoplasm. The protein operates within amino-acid biosynthesis; L-arginine biosynthesis [regulation]. In terms of biological role, regulates arginine biosynthesis genes. The chain is Arginine repressor from Lactobacillus delbrueckii subsp. bulgaricus (strain ATCC 11842 / DSM 20081 / BCRC 10696 / JCM 1002 / NBRC 13953 / NCIMB 11778 / NCTC 12712 / WDCM 00102 / Lb 14).